The following is a 476-amino-acid chain: Sulfite exporter TauE/SafE family protein 3 (476 aa).

12 helical membrane passes run 8–28, 76–92, 99–115, 120–142, 151–171, 172–192, 257–277, 291–311, 339–359, 360–380, 397–417, and 433–453; these read WLGLRSVTIFLINFSLAFAFV, FNWQIVLGTLVGFFGAA, VGGGGIFVPMLSLIIGF, ATAISKCMIMGASVSTVYYNLRL, IIDYDLALLIQPMLMLGISIG, VAFNVIFPDWLVTVLLIVLFL, VYWKELGLLVFVWIVFLALQI, VINLLQIPVAVGVSGYEAVAL, FGIIAGIVGGLLGLGGGFIMG, PLFLELGVPPQVSSATATFAM, FPVPYALYLVGVATIAAWVGQ, and IIFILASMIFISAISLGGVGI.

This sequence belongs to the 4-toluene sulfonate uptake permease (TSUP) (TC 2.A.102) family.

The protein resides in the membrane. This chain is Sulfite exporter TauE/SafE family protein 3, found in Arabidopsis thaliana (Mouse-ear cress).